The following is a 245-amino-acid chain: Thiopurine S-methyltransferase (245 aa).

An S-adenosyl-L-methionine-binding site is contributed by 29 to 40 (WREKWVDGKIGF). Phe-40 is a binding site for substrate. Lys-58 bears the N6-acetyllysine mark. S-adenosyl-L-methionine contacts are provided by Leu-69, Glu-90, and Arg-152.

It belongs to the class I-like SAM-binding methyltransferase superfamily. TPMT family. As to quaternary structure, monomer.

It is found in the cytoplasm. It catalyses the reaction S-adenosyl-L-methionine + a thiopurine = S-adenosyl-L-homocysteine + a thiopurine S-methylether.. This Lynx rufus (Bobcat) protein is Thiopurine S-methyltransferase (TPMT).